The sequence spans 230 residues: 7-cyano-7-deazaguanine synthase (230 aa).

16 to 26 contributes to the ATP binding site; sequence LSGGLDSATVV. Cysteine 195, cysteine 205, cysteine 208, and cysteine 211 together coordinate Zn(2+).

The protein belongs to the QueC family. It depends on Zn(2+) as a cofactor.

The enzyme catalyses 7-carboxy-7-deazaguanine + NH4(+) + ATP = 7-cyano-7-deazaguanine + ADP + phosphate + H2O + H(+). The protein operates within purine metabolism; 7-cyano-7-deazaguanine biosynthesis. Functionally, catalyzes the ATP-dependent conversion of 7-carboxy-7-deazaguanine (CDG) to 7-cyano-7-deazaguanine (preQ(0)). This chain is 7-cyano-7-deazaguanine synthase, found in Pseudomonas fluorescens (strain Pf0-1).